Here is a 227-residue protein sequence, read N- to C-terminus: MVFDARDGADKLVIALPKGRILKEAMPLIEAAGLSPEPSFDDPDSRQLRFSTSDPRVDIIRVRSFDVATFVAFGAAHIGVAGNDVILEFNYPELYAPLDLGIGACRLSVAEAERFSAEDDPGRWSHIRVATKYPEITRRHFAARGVQAECIKLNGAMELAPALGLCRRIVDLVSSGATLKANGLVEVERILDVTSRLVVNRTAMKVRSREMTAWIERFREACDAVAA.

Belongs to the ATP phosphoribosyltransferase family. Short subfamily. In terms of assembly, heteromultimer composed of HisG and HisZ subunits.

It localises to the cytoplasm. It catalyses the reaction 1-(5-phospho-beta-D-ribosyl)-ATP + diphosphate = 5-phospho-alpha-D-ribose 1-diphosphate + ATP. It participates in amino-acid biosynthesis; L-histidine biosynthesis; L-histidine from 5-phospho-alpha-D-ribose 1-diphosphate: step 1/9. Its function is as follows. Catalyzes the condensation of ATP and 5-phosphoribose 1-diphosphate to form N'-(5'-phosphoribosyl)-ATP (PR-ATP). Has a crucial role in the pathway because the rate of histidine biosynthesis seems to be controlled primarily by regulation of HisG enzymatic activity. This Rhodospirillum rubrum (strain ATCC 11170 / ATH 1.1.1 / DSM 467 / LMG 4362 / NCIMB 8255 / S1) protein is ATP phosphoribosyltransferase.